A 105-amino-acid polypeptide reads, in one-letter code: uncharacterized protein (105 aa).

Residues 1–27 (MQSPAMKRIKSSSHSRWDGSGSVNEMP) form a disordered region.

It is found in the mitochondrion. This is an uncharacterized protein from Arabidopsis thaliana (Mouse-ear cress).